Consider the following 957-residue polypeptide: Kinesin heavy chain isoform 5C (957 aa).

Residues S8–I327 enclose the Kinesin motor domain. ATP is bound by residues Q87, S89, S90, G91, K92, T93, H94, and K99. Residues V174–K315 are microtubule-binding. Positions V406–A923 form a coiled coil. The segment at R859–Q956 is globular. The interval K911–K957 is disordered.

Belongs to the TRAFAC class myosin-kinesin ATPase superfamily. Kinesin family. Kinesin subfamily. Oligomer composed of two heavy chains and two light chains. Interacts with GRIP1 and KLC3. Interacts with TRAK1. Interacts with ZFYVE27. Highest expression in brain, prostate and testis, and moderate expression in kidney, small intestine and ovary.

It localises to the cytoplasm. The protein resides in the cytoskeleton. It is found in the cell projection. Its subcellular location is the dendrite. It carries out the reaction ATP + H2O = ADP + phosphate + H(+). In terms of biological role, microtubule-associated force-producing protein that may play a role in organelle transport. Has ATPase activity. Involved in synaptic transmission. Mediates dendritic trafficking of mRNAs. Required for anterograde axonal transportation of MAPK8IP3/JIP3 which is essential for MAPK8IP3/JIP3 function in axon elongation. This chain is Kinesin heavy chain isoform 5C (KIF5C), found in Homo sapiens (Human).